We begin with the raw amino-acid sequence, 503 residues long: GMP synthase [glutamine-hydrolyzing] (503 aa).

In terms of domain architecture, Glutamine amidotransferase type-1 spans 1–189 (MVLVLDFGSQ…FLELAGAKRD (189 aa)). The Nucleophile role is filled by C78. Active-site residues include H164 and E166. A GMPS ATP-PPase domain is found at 190 to 378 (WTPEHVLEEL…LGLPDTLRLR (189 aa)). 217–223 (SGGVDSS) is a binding site for ATP.

As to quaternary structure, homodimer.

The catalysed reaction is XMP + L-glutamine + ATP + H2O = GMP + L-glutamate + AMP + diphosphate + 2 H(+). It functions in the pathway purine metabolism; GMP biosynthesis; GMP from XMP (L-Gln route): step 1/1. Functionally, catalyzes the synthesis of GMP from XMP. The chain is GMP synthase [glutamine-hydrolyzing] from Thermus thermophilus (strain ATCC BAA-163 / DSM 7039 / HB27).